Here is a 61-residue protein sequence, read N- to C-terminus: Phosphoenolpyruvate synthase (61 aa).

Belongs to the PEP-utilizing enzyme family. Mg(2+) serves as cofactor.

It catalyses the reaction pyruvate + ATP + H2O = phosphoenolpyruvate + AMP + phosphate + 2 H(+). Its pathway is carbohydrate biosynthesis; gluconeogenesis. Functionally, catalyzes the phosphorylation of pyruvate to phosphoenolpyruvate. This Enterobacter agglomerans (Erwinia herbicola) protein is Phosphoenolpyruvate synthase (ppsA).